A 222-amino-acid chain; its full sequence is Transmembrane protein 114 (222 aa).

The helical transmembrane segment at 7–27 threads the bilayer; that stretch reads ALAGAAALSGALSFVLLAAAI. Asn54 and Asn88 each carry an N-linked (GlcNAc...) asparagine glycan. Transmembrane regions (helical) follow at residues 105–125, 133–153, and 188–208; these read FVIL…TGFL, LLLL…LTGI, and LALG…FLAA.

It is found in the cell junction. Its subcellular location is the tight junction. The protein resides in the lateral cell membrane. It localises to the apical cell membrane. The sequence is that of Transmembrane protein 114 from Mus musculus (Mouse).